We begin with the raw amino-acid sequence, 331 residues long: Probable deacetylase MTH_1194 (331 aa).

The active-site Proton donor/acceptor is His118. Zn(2+)-binding residues include Asp155, His157, and Asp244.

The protein belongs to the histone deacetylase family. It depends on Zn(2+) as a cofactor.

Functionally, probable deacetylase. This chain is Probable deacetylase MTH_1194, found in Methanothermobacter thermautotrophicus (strain ATCC 29096 / DSM 1053 / JCM 10044 / NBRC 100330 / Delta H) (Methanobacterium thermoautotrophicum).